The sequence spans 200 residues: Non-specific lipid transfer protein GPI-anchored 16 (200 aa).

A signal peptide spans Met1–Gly20. Intrachain disulfides connect Cys27–Cys72, Cys38–Cys56, Cys57–Cys98, and Cys70–Cys107. An N-linked (GlcNAc...) asparagine glycan is attached at Asn87. Residues Ser134–Ser182 are disordered. Over residues Ala140–Thr163 the composition is skewed to low complexity. Thr177 carries the GPI-anchor amidated threonine lipid modification. A propeptide spans Gly178–Leu200 (removed in mature form).

The protein belongs to the plant LTP family. As to expression, expressed in seedlings, preferentially in hypocotyls and roots. Also observed in siliques.

The protein resides in the cell membrane. Its function is as follows. Essential protein involved in female gametophyte development. Probable lipid transfer protein. This Arabidopsis thaliana (Mouse-ear cress) protein is Non-specific lipid transfer protein GPI-anchored 16.